The primary structure comprises 476 residues: Angiotensinogen (476 aa).

An N-terminal signal peptide occupies residues 1–24; sequence MAPAGLSLGATILCLLAWAGLAAG. C42 and C161 are joined by a disulfide. The disordered stretch occupies residues 45 to 64; it reads LEKPSVETPADPTLTPVPIQ. Residue N295 is glycosylated (N-linked (GlcNAc...) asparagine).

It belongs to the serpin family. Post-translationally, in response to low blood pressure, the enzyme renin/REN cleaves angiotensinogen to produce angiotensin-1. Angiotensin-1 is a substrate of ACE (angiotensin converting enzyme) that removes a dipeptide to yield the physiologically active peptide angiotensin-2. Angiotensin-1 and angiotensin-2 can be further processed to generate angiotensin-3, angiotensin-4. Angiotensin 1-9 is cleaved from angiotensin-1 by ACE2 and can be further processed by ACE to produce angiotensin 1-7, angiotensin 1-5 and angiotensin 1-4. Angiotensin 1-7 has also been proposed to be cleaved from angiotensin-2 by ACE2 or from angiotensin-1 by MME (neprilysin). The disulfide bond is labile. Angiotensinogen is present in the circulation in a near 40:60 ratio with the oxidized disulfide-bonded form, which preferentially interacts with receptor-bound renin.

The protein resides in the secreted. Essential component of the renin-angiotensin system (RAS), a potent regulator of blood pressure, body fluid and electrolyte homeostasis. In terms of biological role, acts directly on vascular smooth muscle as a potent vasoconstrictor, affects cardiac contractility and heart rate through its action on the sympathetic nervous system, and alters renal sodium and water absorption through its ability to stimulate the zona glomerulosa cells of the adrenal cortex to synthesize and secrete aldosterone. Acts by binding to angiotensin receptors AGTR1 and AGTR2. Also binds the DEAR/FBXW7-AS1 receptor. Functionally, stimulates aldosterone release. Its function is as follows. Is a ligand for the G-protein coupled receptor MAS1. Has vasodilator and antidiuretic effects. Has an antithrombotic effect that involves MAS1-mediated release of nitric oxide from platelets. The protein is Angiotensinogen (AGT) of Ovis aries (Sheep).